The sequence spans 116 residues: Ribosome-binding factor A (116 aa).

Belongs to the RbfA family. Monomer. Binds 30S ribosomal subunits, but not 50S ribosomal subunits or 70S ribosomes.

It localises to the cytoplasm. In terms of biological role, one of several proteins that assist in the late maturation steps of the functional core of the 30S ribosomal subunit. Associates with free 30S ribosomal subunits (but not with 30S subunits that are part of 70S ribosomes or polysomes). Required for efficient processing of 16S rRNA. May interact with the 5'-terminal helix region of 16S rRNA. The protein is Ribosome-binding factor A of Streptococcus pneumoniae (strain ATCC BAA-255 / R6).